Here is a 420-residue protein sequence, read N- to C-terminus: 3-phosphoshikimate 1-carboxyvinyltransferase (420 aa).

3 residues coordinate 3-phosphoshikimate: Lys-26, Ser-27, and Arg-31. Lys-26 serves as a coordination point for phosphoenolpyruvate. Residues Gly-97 and Arg-125 each coordinate phosphoenolpyruvate. Residues Ser-170, Ser-171, Gln-172, Asp-297, Asn-320, and Lys-324 each contribute to the 3-phosphoshikimate site. Gln-172 lines the phosphoenolpyruvate pocket. The Proton acceptor role is filled by Asp-297. Phosphoenolpyruvate contacts are provided by Arg-328, Arg-375, and Lys-400.

Belongs to the EPSP synthase family. Monomer.

The protein localises to the cytoplasm. The catalysed reaction is 3-phosphoshikimate + phosphoenolpyruvate = 5-O-(1-carboxyvinyl)-3-phosphoshikimate + phosphate. It participates in metabolic intermediate biosynthesis; chorismate biosynthesis; chorismate from D-erythrose 4-phosphate and phosphoenolpyruvate: step 6/7. Functionally, catalyzes the transfer of the enolpyruvyl moiety of phosphoenolpyruvate (PEP) to the 5-hydroxyl of shikimate-3-phosphate (S3P) to produce enolpyruvyl shikimate-3-phosphate and inorganic phosphate. This Rhizobium etli (strain ATCC 51251 / DSM 11541 / JCM 21823 / NBRC 15573 / CFN 42) protein is 3-phosphoshikimate 1-carboxyvinyltransferase.